An 800-amino-acid polypeptide reads, in one-letter code: DNA topoisomerase 1 (800 aa).

In terms of domain architecture, Toprim spans 1–111 (MKLVIVESPA…VKSDDFFKRV (111 aa)). Mg(2+) contacts are provided by glutamate 7 and aspartate 80. The region spanning 132–568 (DNNLVNAQQA…FWNGFNHNIE (437 aa)) is the Topo IA-type catalytic domain. The segment at 166-171 (SAGRVQ) is interaction with DNA. Tyrosine 304 functions as the O-(5'-phospho-DNA)-tyrosine intermediate in the catalytic mechanism. Residues 600-627 (CPSCKTGELSLKLGKFGAFLACSNYPEC) form a C4-type zinc finger.

Belongs to the type IA topoisomerase family. As to quaternary structure, monomer. The cofactor is Mg(2+).

It catalyses the reaction ATP-independent breakage of single-stranded DNA, followed by passage and rejoining.. Functionally, releases the supercoiling and torsional tension of DNA, which is introduced during the DNA replication and transcription, by transiently cleaving and rejoining one strand of the DNA duplex. Introduces a single-strand break via transesterification at a target site in duplex DNA. The scissile phosphodiester is attacked by the catalytic tyrosine of the enzyme, resulting in the formation of a DNA-(5'-phosphotyrosyl)-enzyme intermediate and the expulsion of a 3'-OH DNA strand. The free DNA strand then undergoes passage around the unbroken strand, thus removing DNA supercoils. Finally, in the religation step, the DNA 3'-OH attacks the covalent intermediate to expel the active-site tyrosine and restore the DNA phosphodiester backbone. The protein is DNA topoisomerase 1 of Rickettsia bellii (strain RML369-C).